The following is a 217-amino-acid chain: Probable transaldolase (217 aa).

Lys-83 serves as the catalytic Schiff-base intermediate with substrate.

This sequence belongs to the transaldolase family. Type 3B subfamily.

Its subcellular location is the cytoplasm. The catalysed reaction is D-sedoheptulose 7-phosphate + D-glyceraldehyde 3-phosphate = D-erythrose 4-phosphate + beta-D-fructose 6-phosphate. Its pathway is carbohydrate degradation; pentose phosphate pathway; D-glyceraldehyde 3-phosphate and beta-D-fructose 6-phosphate from D-ribose 5-phosphate and D-xylulose 5-phosphate (non-oxidative stage): step 2/3. In terms of biological role, transaldolase is important for the balance of metabolites in the pentose-phosphate pathway. In Hydrogenobaculum sp. (strain Y04AAS1), this protein is Probable transaldolase.